The following is a 277-amino-acid chain: Acetyl-coenzyme A carboxylase carboxyl transferase subunit beta (277 aa).

The CoA carboxyltransferase N-terminal domain occupies Leu25–Ser277. The Zn(2+) site is built by Cys29, Cys32, Cys47, and Cys50. The C4-type zinc finger occupies Cys29–Cys50.

This sequence belongs to the AccD/PCCB family. Acetyl-CoA carboxylase is a heterohexamer composed of biotin carboxyl carrier protein (AccB), biotin carboxylase (AccC) and two subunits each of ACCase subunit alpha (AccA) and ACCase subunit beta (AccD). Requires Zn(2+) as cofactor.

The protein resides in the cytoplasm. It catalyses the reaction N(6)-carboxybiotinyl-L-lysyl-[protein] + acetyl-CoA = N(6)-biotinyl-L-lysyl-[protein] + malonyl-CoA. Its pathway is lipid metabolism; malonyl-CoA biosynthesis; malonyl-CoA from acetyl-CoA: step 1/1. Component of the acetyl coenzyme A carboxylase (ACC) complex. Biotin carboxylase (BC) catalyzes the carboxylation of biotin on its carrier protein (BCCP) and then the CO(2) group is transferred by the transcarboxylase to acetyl-CoA to form malonyl-CoA. The chain is Acetyl-coenzyme A carboxylase carboxyl transferase subunit beta from Levilactobacillus brevis (strain ATCC 367 / BCRC 12310 / CIP 105137 / JCM 1170 / LMG 11437 / NCIMB 947 / NCTC 947) (Lactobacillus brevis).